Reading from the N-terminus, the 376-residue chain is Beta-centractin (376 aa).

M1 carries the post-translational modification N-acetylmethionine. Position 4 is a 3'-nitrotyrosine (Y4).

This sequence belongs to the actin family. ARP1 subfamily.

Its subcellular location is the cytoplasm. The protein resides in the cytoskeleton. The protein localises to the microtubule organizing center. It is found in the centrosome. Component of a multi-subunit complex involved in microtubule based vesicle motility. It is associated with the centrosome. This is Beta-centractin (ACTR1B) from Bos taurus (Bovine).